A 379-amino-acid polypeptide reads, in one-letter code: AT-rich binding protein (379 aa).

The C2H2-type 1 zinc-finger motif lies at 29–52 (IVCHTCQEELQTQDQFWKHIQDEH). Basic and acidic residues predominate over residues 114–124 (EQREVELHEAH). Disordered regions lie at residues 114–148 (EQRE…DAAK) and 221–267 (PTAS…STTL). Composition is skewed to low complexity over residues 125 to 143 (QQQQ…QQQQ), 223 to 242 (ASFV…TTPP), and 249 to 262 (QQQQ…QQQQ). 2 C2H2-type zinc fingers span residues 312–336 (YICD…RVVH) and 342–365 (FNCD…KKKH).

It localises to the nucleus. In terms of biological role, may be a transcription factor for genes having (A+T) stretches in their promoter and/or enhancer regions. Binds to AT rich DNA. This chain is AT-rich binding protein, found in Drosophila willistoni (Fruit fly).